Here is a 116-residue protein sequence, read N- to C-terminus: MAGRSGGSDRELLTAVRIIKILYQSNPHPSPEGTRQARRNRRRRWRERQRQIHSISERILSTVLGRSSEPVPLQLPPLDRLTLDCSEDCGTSGTQGVGSPQILVESPAVLESGTKE.

Phosphoserine; by host CK2 is present on residues Ser5 and Ser8. The interval Ile18 to Asn26 is homomultimerization. Positions Gln24 to Gln49 are disordered. The short motif at Thr34–Arg50 is the Nuclear localization signal and RNA-binding (RRE) element. The span at Gln36–Glu47 shows a compositional bias: basic residues. Residues Leu73–Asp84 carry the Nuclear export signal and binding to XPO1 motif. A phosphoserine; by host mark is found at Ser92 and Ser99.

Belongs to the HIV-1 REV protein family. As to quaternary structure, homomultimer; when bound to the RRE. Multimeric assembly is essential for activity and may involve XPO1. Binds to human KPNB1, XPO1, TNPO1, RANBP5 and IPO7. Interacts with the viral Integrase. Interacts with human KHDRBS1. Interacts with human NAP1; this interaction decreases Rev multimerization and stimulates its activity. Interacts with human DEAD-box helicases DDX3 and DDX24; these interactions may serve for viral RNA export to the cytoplasm and packaging, respectively. Interacts with human PSIP1; this interaction may inhibit HIV-1 DNA integration by promoting dissociation of the Integrase-LEDGF/p75 complex. In terms of processing, asymmetrically arginine dimethylated at one site by host PRMT6. Methylation impairs the RNA-binding activity and export of viral RNA from the nucleus to the cytoplasm. Post-translationally, phosphorylated by protein kinase CK2. Presence of, and maybe binding to the N-terminus of the regulatory beta subunit of CK2 is necessary for CK2-mediated Rev's phosphorylation.

The protein localises to the host nucleus. It localises to the host nucleolus. The protein resides in the host cytoplasm. Escorts unspliced or incompletely spliced viral pre-mRNAs (late transcripts) out of the nucleus of infected cells. These pre-mRNAs carry a recognition sequence called Rev responsive element (RRE) located in the env gene, that is not present in fully spliced viral mRNAs (early transcripts). This function is essential since most viral proteins are translated from unspliced or partially spliced pre-mRNAs which cannot exit the nucleus by the pathway used by fully processed cellular mRNAs. Rev itself is translated from a fully spliced mRNA that readily exits the nucleus. Rev's nuclear localization signal (NLS) binds directly to KPNB1/Importin beta-1 without previous binding to KPNA1/Importin alpha-1. KPNB1 binds to the GDP bound form of RAN (Ran-GDP) and targets Rev to the nucleus. In the nucleus, the conversion from Ran-GDP to Ran-GTP dissociates Rev from KPNB1 and allows Rev's binding to the RRE in viral pre-mRNAs. Rev multimerization on the RRE via cooperative assembly exposes its nuclear export signal (NES) to the surface. Rev can then form a complex with XPO1/CRM1 and Ran-GTP, leading to nuclear export of the complex. Conversion from Ran-GTP to Ran-GDP mediates dissociation of the Rev/RRE/XPO1/RAN complex, so that Rev can return to the nucleus for a subsequent round of export. Beside KPNB1, also seems to interact with TNPO1/Transportin-1, RANBP5/IPO5 and IPO7/RANBP7 for nuclear import. The nucleoporin-like HRB/RIP is an essential cofactor that probably indirectly interacts with Rev to release HIV RNAs from the perinuclear region to the cytoplasm. The protein is Protein Rev of Human immunodeficiency virus type 1 group M subtype B (isolate SF33) (HIV-1).